The sequence spans 256 residues: GTP cyclohydrolase FolE2 (256 aa).

The protein belongs to the GTP cyclohydrolase IV family.

The enzyme catalyses GTP + H2O = 7,8-dihydroneopterin 3'-triphosphate + formate + H(+). It functions in the pathway cofactor biosynthesis; 7,8-dihydroneopterin triphosphate biosynthesis; 7,8-dihydroneopterin triphosphate from GTP: step 1/1. In terms of biological role, converts GTP to 7,8-dihydroneopterin triphosphate. The protein is GTP cyclohydrolase FolE2 of Caldicellulosiruptor saccharolyticus (strain ATCC 43494 / DSM 8903 / Tp8T 6331).